The primary structure comprises 259 residues: NADP-dependent 3-hydroxy acid dehydrogenase (259 aa).

Isoleucine 11 lines the NADP(+) pocket. At serine 42 the chain carries Phosphoserine. At threonine 43 the chain carries Phosphothreonine. NADP(+)-binding residues include aspartate 65, asparagine 92, arginine 126, tyrosine 158, lysine 162, and valine 191. Tyrosine 158 acts as the Proton acceptor in catalysis. The Lowers pKa of active site Tyr role is filled by lysine 162.

It belongs to the short-chain dehydrogenases/reductases (SDR) family. Homotetramer.

It is found in the cytoplasm. Its subcellular location is the nucleus. The enzyme catalyses L-allo-threonine + NADP(+) = aminoacetone + CO2 + NADPH. Its function is as follows. NADP-dependent dehydrogenase with broad substrate specificity acting on 3-hydroxy acids. Catalyzes the NADP-dependent oxidation of L-allo-threonine to L-2-amino-3-keto-butyrate, which is spontaneously decarboxylated into aminoacetone. Also acts on D-threonine, L-serine, D-serine, D-3-hydroxyisobutyrate, L-3-hydroxyisobutyrate, D-glycerate and L-glycerate. The chain is NADP-dependent 3-hydroxy acid dehydrogenase from Schizosaccharomyces pombe (strain 972 / ATCC 24843) (Fission yeast).